A 485-amino-acid polypeptide reads, in one-letter code: 4-alpha-glucanotransferase (485 aa).

It belongs to the disproportionating enzyme family.

It is found in the cytoplasm. It catalyses the reaction Transfers a segment of a (1-&gt;4)-alpha-D-glucan to a new position in an acceptor, which may be glucose or a (1-&gt;4)-alpha-D-glucan.. The sequence is that of 4-alpha-glucanotransferase (malQ) from Aquifex aeolicus (strain VF5).